The sequence spans 504 residues: Cytochrome P450 3A11 (504 aa).

Heme is bound at residue Cys-443.

It belongs to the cytochrome P450 family. The cofactor is heme. As to expression, highly expressed in liver.

Its subcellular location is the endoplasmic reticulum membrane. It is found in the microsome membrane. It catalyses the reaction an organic molecule + reduced [NADPH--hemoprotein reductase] + O2 = an alcohol + oxidized [NADPH--hemoprotein reductase] + H2O + H(+). In terms of biological role, catalyzes erythromycin N-demethylation, nifedipine oxidation and testosterone 6 beta-hydroxylation. The protein is Cytochrome P450 3A11 (Cyp3a11) of Mus musculus (Mouse).